We begin with the raw amino-acid sequence, 288 residues long: Phosphatidylserine decarboxylase proenzyme (288 aa).

Catalysis depends on charge relay system; for autoendoproteolytic cleavage activity residues D101, H158, and S262. Catalysis depends on S262, which acts as the Schiff-base intermediate with substrate; via pyruvic acid; for decarboxylase activity. Pyruvic acid (Ser); by autocatalysis is present on S262.

It belongs to the phosphatidylserine decarboxylase family. PSD-B subfamily. Prokaryotic type I sub-subfamily. In terms of assembly, heterodimer of a large membrane-associated beta subunit and a small pyruvoyl-containing alpha subunit. The cofactor is pyruvate. In terms of processing, is synthesized initially as an inactive proenzyme. Formation of the active enzyme involves a self-maturation process in which the active site pyruvoyl group is generated from an internal serine residue via an autocatalytic post-translational modification. Two non-identical subunits are generated from the proenzyme in this reaction, and the pyruvate is formed at the N-terminus of the alpha chain, which is derived from the carboxyl end of the proenzyme. The autoendoproteolytic cleavage occurs by a canonical serine protease mechanism, in which the side chain hydroxyl group of the serine supplies its oxygen atom to form the C-terminus of the beta chain, while the remainder of the serine residue undergoes an oxidative deamination to produce ammonia and the pyruvoyl prosthetic group on the alpha chain. During this reaction, the Ser that is part of the protease active site of the proenzyme becomes the pyruvoyl prosthetic group, which constitutes an essential element of the active site of the mature decarboxylase.

Its subcellular location is the cell membrane. It catalyses the reaction a 1,2-diacyl-sn-glycero-3-phospho-L-serine + H(+) = a 1,2-diacyl-sn-glycero-3-phosphoethanolamine + CO2. The protein operates within phospholipid metabolism; phosphatidylethanolamine biosynthesis; phosphatidylethanolamine from CDP-diacylglycerol: step 2/2. Its function is as follows. Catalyzes the formation of phosphatidylethanolamine (PtdEtn) from phosphatidylserine (PtdSer). The polypeptide is Phosphatidylserine decarboxylase proenzyme (Alkalilimnicola ehrlichii (strain ATCC BAA-1101 / DSM 17681 / MLHE-1)).